Reading from the N-terminus, the 351-residue chain is Lipoyl synthase, mitochondrial (351 aa).

Cys-84, Cys-89, Cys-95, Cys-115, Cys-119, Cys-122, and Ser-330 together coordinate [4Fe-4S] cluster. A Radical SAM core domain is found at 100–319 (DKSKATATIM…QKRAMDMGFL (220 aa)).

The protein belongs to the radical SAM superfamily. Lipoyl synthase family. The cofactor is [4Fe-4S] cluster.

It is found in the mitochondrion. The enzyme catalyses [[Fe-S] cluster scaffold protein carrying a second [4Fe-4S](2+) cluster] + N(6)-octanoyl-L-lysyl-[protein] + 2 oxidized [2Fe-2S]-[ferredoxin] + 2 S-adenosyl-L-methionine + 4 H(+) = [[Fe-S] cluster scaffold protein] + N(6)-[(R)-dihydrolipoyl]-L-lysyl-[protein] + 4 Fe(3+) + 2 hydrogen sulfide + 2 5'-deoxyadenosine + 2 L-methionine + 2 reduced [2Fe-2S]-[ferredoxin]. The protein operates within protein modification; protein lipoylation via endogenous pathway; protein N(6)-(lipoyl)lysine from octanoyl-[acyl-carrier-protein]: step 2/2. Its function is as follows. Catalyzes the radical-mediated insertion of two sulfur atoms into the C-6 and C-8 positions of the octanoyl moiety bound to the lipoyl domains of lipoate-dependent enzymes, thereby converting the octanoylated domains into lipoylated derivatives. This is Lipoyl synthase, mitochondrial from Yarrowia lipolytica (strain CLIB 122 / E 150) (Yeast).